We begin with the raw amino-acid sequence, 557 residues long: Isocitrate lyase (557 aa).

A Phosphothreonine modification is found at threonine 53. 106-108 (SGW) contributes to the substrate binding site. Mg(2+) is bound at residue aspartate 179. Cysteine 217 serves as the catalytic Proton acceptor. Substrate is bound by residues 218–219 (GH), arginine 254, 437–441 (NLSPS), and threonine 471.

It belongs to the isocitrate lyase/PEP mutase superfamily. Isocitrate lyase family. In terms of assembly, homotetramer. Mg(2+) is required as a cofactor. Post-translationally, phosphorylated in response to elevated glucose levels, leading first to reversible inactivation of the enzyme (short-term inactivation), and at a later stage to proteolytic degradation of the protein (long-term inactivation).

The protein resides in the cytoplasm. It is found in the secreted. The protein localises to the extracellular space. It localises to the extracellular matrix. Its subcellular location is the vacuole. The catalysed reaction is D-threo-isocitrate = glyoxylate + succinate. The enzyme catalyses (2S,3R)-3-hydroxybutane-1,2,3-tricarboxylate = pyruvate + succinate. It functions in the pathway carbohydrate metabolism; glyoxylate cycle; (S)-malate from isocitrate: step 1/2. Phosphorylated and inactivated after addition of glucose to the cell culture (repressing conditions). In terms of biological role, catalyzes the formation of succinate and glyoxylate from isocitrate, a key step of the glyoxylate cycle, which operates as an anaplerotic route for replenishing the tricarboxylic acid cycle. Required for growth on ethanol or acetate, but dispensable when fermentable carbon sources are available. Also acts on 2-methylisocitrate. The protein is Isocitrate lyase of Saccharomyces cerevisiae (strain ATCC 204508 / S288c) (Baker's yeast).